Here is a 111-residue protein sequence, read N- to C-terminus: Small ribosomal subunit protein bS16 (111 aa).

The interval 92–111 is disordered; that stretch reads MDVKAKNRKARSSKQEAKEA.

This sequence belongs to the bacterial ribosomal protein bS16 family.

This Rickettsia akari (strain Hartford) protein is Small ribosomal subunit protein bS16.